The primary structure comprises 237 residues: Ribosomal RNA small subunit methyltransferase G (237 aa).

S-adenosyl-L-methionine-binding positions include glycine 78, phenylalanine 83, 129–130 (AE), and arginine 148.

It belongs to the methyltransferase superfamily. RNA methyltransferase RsmG family.

Its subcellular location is the cytoplasm. Its function is as follows. Specifically methylates the N7 position of a guanine in 16S rRNA. In Streptococcus equi subsp. zooepidemicus (strain MGCS10565), this protein is Ribosomal RNA small subunit methyltransferase G.